We begin with the raw amino-acid sequence, 356 residues long: MPTVLALETSCDESAAAVLRLNNGCLQVIASRIASQVEKHAQWGGVVPEVASRLHVEALPHLVEEVLQEAGQSMARFDAVAATVTPGLAGALMVGSVTGRCLAALHALPFFGIHHLEGHLASVLLAEHPPRPPYLVLLVSGGHTELIRVGAESEMVRLGRSHDDAAGEAFDKVGRLLGLAYPGGPAIQALAAAGDSGRFSLPKGRVSKPGGGFHPYDFSFSGLKTAMLRLVQALSEAGEDLPRADLAASFEQVVADVLVERSLLCANDQGLKTVVMVGGVAANRRLRELMSKRGQEQGIEVHTAPLRYCTDNAAMIGAAALQRLVSGDDASSLELGVAARWPLDKTEDLYHSPPPF.

Positions 115 and 119 each coordinate Fe cation. Residues 138–142 (LVSGG), Asp171, Gly184, and Asn283 each bind substrate. Asp311 is a Fe cation binding site.

Belongs to the KAE1 / TsaD family. It depends on Fe(2+) as a cofactor.

The protein localises to the cytoplasm. The catalysed reaction is L-threonylcarbamoyladenylate + adenosine(37) in tRNA = N(6)-L-threonylcarbamoyladenosine(37) in tRNA + AMP + H(+). Its function is as follows. Required for the formation of a threonylcarbamoyl group on adenosine at position 37 (t(6)A37) in tRNAs that read codons beginning with adenine. Is involved in the transfer of the threonylcarbamoyl moiety of threonylcarbamoyl-AMP (TC-AMP) to the N6 group of A37, together with TsaE and TsaB. TsaD likely plays a direct catalytic role in this reaction. In Prochlorococcus marinus (strain MIT 9303), this protein is tRNA N6-adenosine threonylcarbamoyltransferase.